Here is a 1187-residue protein sequence, read N- to C-terminus: Nicotinate dehydrogenase subunit B (1187 aa).

A helical membrane pass occupies residues 764–784; that stretch reads WWFGSLAGVFGAALGMLATAL. Cytochrome c domains are found at residues 804-907, 949-1057, and 1075-1163; these read AMLE…MSQT, AQWN…SSLE, and VSLS…RHRF. 9 residues coordinate heme c: Cys818, Cys821, His822, Cys964, Cys967, His968, Cys1088, Cys1091, and His1092.

Mo-molybdopterin cytosine dinucleotide is required as a cofactor.

Its subcellular location is the membrane. The catalysed reaction is 2 Fe(III)-[cytochrome] + nicotinate + H2O = 2 Fe(II)-[cytochrome] + 6-hydroxynicotinate + 2 H(+). Its pathway is cofactor degradation; nicotinate degradation. Subunit of the two-component enzyme NicAB that mediates nicotinate hydroxylation, the first step in the aerobic nicotinate degradation pathway. Mediates conversion of nicotinate into 6-hydroxynicotinate (6HNA). This is Nicotinate dehydrogenase subunit B (nicB) from Pseudomonas putida (strain ATCC 47054 / DSM 6125 / CFBP 8728 / NCIMB 11950 / KT2440).